Here is a 508-residue protein sequence, read N- to C-terminus: MEEKKDPRYLDLVISRKNDLLYPLIFQEYIYTLVHDHNLFPTILLENLGYDKRFRFLIVKRLITQMYQQNHLSLSAANLKQNPYFLYNKVLYSQKISEGLSIIVEIPFSLQLETSFKNLELVRVQNLKSIHSIFPFLEDKFPYLNLVSDGLFSYPIHLEKLVQILRYWLKDPASLHFLRLFFHEYWNWSHPSFEKKNLISFEKRNLRLFVFLYNSYVYEYESILFFIRRQFFHLPSKPFRFFFERLYFYVKIENLTEVFSKGSPVTLELFKEPNIHYIRYQGKFFFAYKGMPLLMNKWKYYFVTLFQNHFDVWFQTDKIHINPLYKHSFHCVGYLLSLKWNPSVIRSQMLQNAFIIENTMKKMDILVPIILMIDSLSKMKFCNKIGHPVSKPTWTDLLDSDIIDRFVRLCNKISYFYSGSSKKKNLYQIHYILRFACLKPLARKPKSSVRAFFKKLGSSFLEELFLEXQISSLIFIRSSPRSSDRSNQSKVRFWYLDIISINEIINHE.

Belongs to the intron maturase 2 family. MatK subfamily.

It is found in the plastid. The protein localises to the chloroplast. In terms of biological role, usually encoded in the trnK tRNA gene intron. Probably assists in splicing its own and other chloroplast group II introns. The protein is Maturase K of Marathrum schiedeanum.